We begin with the raw amino-acid sequence, 213 residues long: MSQLTIALTKGRILEETLPLLSAAGIEPLEDIQKSRKLLFETSSQNVRLLILRGVDVPTYVEFGAADVGVSGKDTLIEHNSKSYYEPLDLHIAKCRMMTAGIKGVPQKSGRIRVATKYVGLARQYYAEQGRQVDIIKLYGAMELAPIMNLCDEIVDIVDTGNTLRANGLEPRETICEISSRLIVNKASMKMKHREIEALIDAVSAAVNERIAA.

Belongs to the ATP phosphoribosyltransferase family. Short subfamily. As to quaternary structure, heteromultimer composed of HisG and HisZ subunits.

It localises to the cytoplasm. The enzyme catalyses 1-(5-phospho-beta-D-ribosyl)-ATP + diphosphate = 5-phospho-alpha-D-ribose 1-diphosphate + ATP. Its pathway is amino-acid biosynthesis; L-histidine biosynthesis; L-histidine from 5-phospho-alpha-D-ribose 1-diphosphate: step 1/9. In terms of biological role, catalyzes the condensation of ATP and 5-phosphoribose 1-diphosphate to form N'-(5'-phosphoribosyl)-ATP (PR-ATP). Has a crucial role in the pathway because the rate of histidine biosynthesis seems to be controlled primarily by regulation of HisG enzymatic activity. The sequence is that of ATP phosphoribosyltransferase from Teredinibacter turnerae (strain ATCC 39867 / T7901).